Here is a 348-residue protein sequence, read N- to C-terminus: 3-isopropylmalate dehydrogenase (348 aa).

76–87 (GPKWTDPNNRPE) lines the NAD(+) pocket. The substrate site is built by Arg-94, Arg-104, Arg-132, and Asp-217. Mg(2+)-binding residues include Asp-217, Asp-241, and Asp-245. 275-287 (GSAPDIAGKNVAN) is a binding site for NAD(+).

Belongs to the isocitrate and isopropylmalate dehydrogenases family. LeuB type 1 subfamily. As to quaternary structure, homodimer. The cofactor is Mg(2+). It depends on Mn(2+) as a cofactor.

It is found in the cytoplasm. It catalyses the reaction (2R,3S)-3-isopropylmalate + NAD(+) = 4-methyl-2-oxopentanoate + CO2 + NADH. The protein operates within amino-acid biosynthesis; L-leucine biosynthesis; L-leucine from 3-methyl-2-oxobutanoate: step 3/4. Catalyzes the oxidation of 3-carboxy-2-hydroxy-4-methylpentanoate (3-isopropylmalate) to 3-carboxy-4-methyl-2-oxopentanoate. The product decarboxylates to 4-methyl-2 oxopentanoate. The sequence is that of 3-isopropylmalate dehydrogenase from Staphylococcus aureus (strain MW2).